We begin with the raw amino-acid sequence, 310 residues long: Ribosomal RNA small subunit methyltransferase H (310 aa).

Residues A32–H34, D51, F84, D102, and Q109 each bind S-adenosyl-L-methionine.

Belongs to the methyltransferase superfamily. RsmH family.

Its subcellular location is the cytoplasm. The enzyme catalyses cytidine(1402) in 16S rRNA + S-adenosyl-L-methionine = N(4)-methylcytidine(1402) in 16S rRNA + S-adenosyl-L-homocysteine + H(+). In terms of biological role, specifically methylates the N4 position of cytidine in position 1402 (C1402) of 16S rRNA. This Campylobacter hominis (strain ATCC BAA-381 / DSM 21671 / CCUG 45161 / LMG 19568 / NCTC 13146 / CH001A) protein is Ribosomal RNA small subunit methyltransferase H.